The following is a 133-amino-acid chain: Hemoglobin subunit alpha-2 (133 aa).

The Globin domain occupies 1 to 133 (NVKAVWEHVK…VKNVLTSRYR (133 aa)). Residue His-50 participates in O2 binding. His-79 lines the heme b pocket.

Belongs to the globin family. Minor hemoglobin is a heterotetramer of two alpha-2 chains and two beta-2 chains. As to expression, red blood cells.

In terms of biological role, involved in oxygen transport from the lung to the various peripheral tissues. In Pleurodeles waltl (Iberian ribbed newt), this protein is Hemoglobin subunit alpha-2.